The primary structure comprises 64 residues: MDDKVETGNIDVRLLELLVCPLTKGPLEYDAERSELVSRKARLAYPVRGGIPIMLPSEARSLTE.

Belongs to the UPF0434 family.

This is UPF0434 protein BAB2_0345 from Brucella abortus (strain 2308).